The sequence spans 440 residues: D-serine dehydratase (440 aa).

The residue at position 116 (Lys116) is an N6-(pyridoxal phosphate)lysine.

This sequence belongs to the serine/threonine dehydratase family. DsdA subfamily. In terms of assembly, monomer. The cofactor is pyridoxal 5'-phosphate.

The catalysed reaction is D-serine = pyruvate + NH4(+). The protein is D-serine dehydratase of Salmonella paratyphi A (strain ATCC 9150 / SARB42).